The sequence spans 478 residues: Adenosylhomocysteinase (478 aa).

Residues Thr-67, Asp-144, and Glu-204 each contribute to the substrate site. 205–207 (TTT) contributes to the NAD(+) binding site. Residues Lys-234 and Asp-238 each coordinate substrate. NAD(+)-binding positions include Asn-239, 268-273 (GYGDVG), Glu-291, Asn-326, 347-349 (IGH), and Asn-392.

This sequence belongs to the adenosylhomocysteinase family. It depends on NAD(+) as a cofactor.

It is found in the cytoplasm. It carries out the reaction S-adenosyl-L-homocysteine + H2O = L-homocysteine + adenosine. Its pathway is amino-acid biosynthesis; L-homocysteine biosynthesis; L-homocysteine from S-adenosyl-L-homocysteine: step 1/1. Functionally, may play a key role in the regulation of the intracellular concentration of adenosylhomocysteine. The protein is Adenosylhomocysteinase of Nitrosomonas europaea (strain ATCC 19718 / CIP 103999 / KCTC 2705 / NBRC 14298).